The sequence spans 237 residues: Sugar fermentation stimulation protein homolog (237 aa).

It belongs to the SfsA family.

This chain is Sugar fermentation stimulation protein homolog, found in Colwellia psychrerythraea (strain 34H / ATCC BAA-681) (Vibrio psychroerythus).